The sequence spans 55 residues: ATP synthase F(0) complex subunit 8 (55 aa).

The helical transmembrane segment at 4-24 threads the bilayer; it reads LNPSPWFIILLFSWVIFMVIL.

Belongs to the ATPase protein 8 family. Component of the ATP synthase complex composed at least of ATP5F1A/subunit alpha, ATP5F1B/subunit beta, ATP5MC1/subunit c (homooctomer), MT-ATP6/subunit a, MT-ATP8/subunit 8, ATP5ME/subunit e, ATP5MF/subunit f, ATP5MG/subunit g, ATP5MK/subunit k, ATP5MJ/subunit j, ATP5F1C/subunit gamma, ATP5F1D/subunit delta, ATP5F1E/subunit epsilon, ATP5PF/subunit F6, ATP5PB/subunit b, ATP5PD/subunit d, ATP5PO/subunit OSCP. ATP synthase complex consists of a soluble F(1) head domain (subunits alpha(3) and beta(3)) - the catalytic core - and a membrane F(0) domain - the membrane proton channel (subunits c, a, 8, e, f, g, k and j). These two domains are linked by a central stalk (subunits gamma, delta, and epsilon) rotating inside the F1 region and a stationary peripheral stalk (subunits F6, b, d, and OSCP).

The protein localises to the mitochondrion membrane. Its function is as follows. Subunit 8, of the mitochondrial membrane ATP synthase complex (F(1)F(0) ATP synthase or Complex V) that produces ATP from ADP in the presence of a proton gradient across the membrane which is generated by electron transport complexes of the respiratory chain. ATP synthase complex consist of a soluble F(1) head domain - the catalytic core - and a membrane F(1) domain - the membrane proton channel. These two domains are linked by a central stalk rotating inside the F(1) region and a stationary peripheral stalk. During catalysis, ATP synthesis in the catalytic domain of F(1) is coupled via a rotary mechanism of the central stalk subunits to proton translocation. In vivo, can only synthesize ATP although its ATP hydrolase activity can be activated artificially in vitro. Part of the complex F(0) domain. The polypeptide is ATP synthase F(0) complex subunit 8 (Scyliorhinus canicula (Small-spotted catshark)).